A 595-amino-acid chain; its full sequence is Aspartate--tRNA(Asp/Asn) ligase (595 aa).

Glutamate 175 lines the L-aspartate pocket. Residues 199-202 (QQYK) form an aspartate region. Residues arginine 221 and histidine 454 each contribute to the L-aspartate site. Residue 221-223 (RDE) participates in ATP binding. Residue glutamate 488 coordinates ATP. L-aspartate is bound at residue arginine 495. 540-543 (GIDR) contributes to the ATP binding site.

Belongs to the class-II aminoacyl-tRNA synthetase family. Type 1 subfamily. As to quaternary structure, homodimer.

It is found in the cytoplasm. The catalysed reaction is tRNA(Asx) + L-aspartate + ATP = L-aspartyl-tRNA(Asx) + AMP + diphosphate. Functionally, aspartyl-tRNA synthetase with relaxed tRNA specificity since it is able to aspartylate not only its cognate tRNA(Asp) but also tRNA(Asn). Reaction proceeds in two steps: L-aspartate is first activated by ATP to form Asp-AMP and then transferred to the acceptor end of tRNA(Asp/Asn). The chain is Aspartate--tRNA(Asp/Asn) ligase from Brucella abortus (strain S19).